Consider the following 527-residue polypeptide: Phosphoenolpyruvate carboxykinase (ATP) (527 aa).

Substrate is bound by residues arginine 55, tyrosine 191, and lysine 197. Residues lysine 197, histidine 216, and 232-240 (GLSGTGKTT) contribute to the ATP site. Residues lysine 197 and histidine 216 each contribute to the Mn(2+) site. Residue aspartate 253 participates in Mn(2+) binding. Residues glutamate 281, arginine 318, and threonine 443 each contribute to the ATP site. Substrate is bound at residue arginine 318.

It belongs to the phosphoenolpyruvate carboxykinase (ATP) family. Mn(2+) serves as cofactor.

It is found in the cytoplasm. It carries out the reaction oxaloacetate + ATP = phosphoenolpyruvate + ADP + CO2. The protein operates within carbohydrate biosynthesis; gluconeogenesis. Its function is as follows. Involved in the gluconeogenesis. Catalyzes the conversion of oxaloacetate (OAA) to phosphoenolpyruvate (PEP) through direct phosphoryl transfer between the nucleoside triphosphate and OAA. This is Phosphoenolpyruvate carboxykinase (ATP) from Brevibacillus brevis (strain 47 / JCM 6285 / NBRC 100599).